Reading from the N-terminus, the 839-residue chain is Taste receptor type 1 member 2 (839 aa).

An N-terminal signal peptide occupies residues 1 to 19 (MGPRAKTICSLFFLLWVLA). Residues 20–566 (EPAENSDFYL…VFLEWHEAPT (547 aa)) are Extracellular-facing. Asparagine 84, asparagine 248, asparagine 292, asparagine 312, asparagine 368, asparagine 407, asparagine 428, asparagine 487, and asparagine 527 each carry an N-linked (GlcNAc...) asparagine glycan. A helical membrane pass occupies residues 567–587 (IAVALLAALGFLSTLAILVIF). Residues 588–602 (WRHFQTPIVRSAGGP) are Cytoplasmic-facing. The helical transmembrane segment at 603-623 (MCFLMLTLLLVAYMVVPVYVG) threads the bilayer. The Extracellular portion of the chain corresponds to 624-635 (PPKVSTCLCRQA). Residues 636–656 (LFPLCFTICISCIAVRSFQIV) form a helical membrane-spanning segment. Residues 657–681 (CAFKMASRFPRAYSYWVRYQGPYVS) lie on the Cytoplasmic side of the membrane. Residues 682–702 (MAFITVLKMVIVVIGMLATGL) form a helical membrane-spanning segment. Residues 703–727 (SPTTRTDPDDPKITIVSCNPNYRNS) are Extracellular-facing. A helical transmembrane segment spans residues 728–748 (LLFNTSLDLLLSVVGFSFAYM). The Cytoplasmic segment spans residues 749–760 (GKELPTNYNEAK). The chain crosses the membrane as a helical span at residues 761–781 (FITLSMTFYFTSSVSLCTFMS). At 782-784 (AYS) the chain is on the extracellular side. A helical membrane pass occupies residues 785–805 (GVLVTIVDLLVTVLNLLAISL). At 806–839 (GYFGPKCYMILFYPERNTSAYFNSMIQGYTMRRD) the chain is on the cytoplasmic side.

Belongs to the G-protein coupled receptor 3 family. TAS1R subfamily. In terms of assembly, forms heterodimers with TAS1R3.

Its subcellular location is the cell membrane. Functionally, putative taste receptor. TAS1R2/TAS1R3 recognizes diverse natural and synthetic sweeteners. The chain is Taste receptor type 1 member 2 (TAS1R2) from Pan troglodytes (Chimpanzee).